Consider the following 71-residue polypeptide: Prokaryotic ubiquitin-like protein Pup (71 aa).

Over residues 1–18 (MPEKDTGGQHRATRRTEE) the composition is skewed to basic and acidic residues. Residues 1-36 (MPEKDTGGQHRATRRTEEHDETIDEATATSDVQERR) are disordered. Residues 27 to 65 (TATSDVQERREKLDADVDAILDEIDDVLEENAEEFVRSY) are ARC ATPase binding. A coiled-coil region spans residues 30 to 59 (SDVQERREKLDADVDAILDEIDDVLEENAE). Residue Glu71 forms an Isoglutamyl lysine isopeptide (Glu-Lys) (interchain with K-? in acceptor proteins) linkage.

The protein belongs to the prokaryotic ubiquitin-like protein family. In terms of assembly, strongly interacts with the proteasome-associated ATPase ARC through a hydrophobic interface; the interacting region of Pup lies in its C-terminal half. There is one Pup binding site per ARC hexamer ring.

The protein operates within protein degradation; proteasomal Pup-dependent pathway. Protein modifier that is covalently attached to lysine residues of substrate proteins, thereby targeting them for proteasomal degradation. The tagging system is termed pupylation. The chain is Prokaryotic ubiquitin-like protein Pup from Acidothermus cellulolyticus (strain ATCC 43068 / DSM 8971 / 11B).